A 263-amino-acid polypeptide reads, in one-letter code: Endonuclease 8 (263 aa).

Residue Pro2 is the Schiff-base intermediate with DNA of the active site. Catalysis depends on Glu3, which acts as the Proton donor. Lys53 functions as the Proton donor; for beta-elimination activity in the catalytic mechanism. The DNA site is built by Gln70, Arg125, and Asn169. The FPG-type zinc-finger motif lies at 229–263 (KVFHRDGEACERCGGIIEKTTLSSRPFYWCPHCQK). Arg253 serves as the catalytic Proton donor; for delta-elimination activity.

It belongs to the FPG family. Zn(2+) is required as a cofactor.

It carries out the reaction 2'-deoxyribonucleotide-(2'-deoxyribose 5'-phosphate)-2'-deoxyribonucleotide-DNA = a 3'-end 2'-deoxyribonucleotide-(2,3-dehydro-2,3-deoxyribose 5'-phosphate)-DNA + a 5'-end 5'-phospho-2'-deoxyribonucleoside-DNA + H(+). In terms of biological role, involved in base excision repair of DNA damaged by oxidation or by mutagenic agents. Acts as a DNA glycosylase that recognizes and removes damaged bases. Has a preference for oxidized pyrimidines, such as thymine glycol, 5,6-dihydrouracil and 5,6-dihydrothymine. Has AP (apurinic/apyrimidinic) lyase activity and introduces nicks in the DNA strand. Cleaves the DNA backbone by beta-delta elimination to generate a single-strand break at the site of the removed base with both 3'- and 5'-phosphates. This chain is Endonuclease 8, found in Salmonella dublin (strain CT_02021853).